A 164-amino-acid polypeptide reads, in one-letter code: Protein-export protein SecB (164 aa).

Belongs to the SecB family. In terms of assembly, homotetramer, a dimer of dimers. One homotetramer interacts with 1 SecA dimer.

The protein resides in the cytoplasm. Its function is as follows. One of the proteins required for the normal export of preproteins out of the cell cytoplasm. It is a molecular chaperone that binds to a subset of precursor proteins, maintaining them in a translocation-competent state. It also specifically binds to its receptor SecA. In Shewanella denitrificans (strain OS217 / ATCC BAA-1090 / DSM 15013), this protein is Protein-export protein SecB.